Here is a 324-residue protein sequence, read N- to C-terminus: Glycerol-3-phosphate dehydrogenase [NAD(P)+] (324 aa).

Residues serine 10, phenylalanine 11, arginine 31, and lysine 106 each coordinate NADPH. Residues lysine 106, glycine 134, and serine 136 each contribute to the sn-glycerol 3-phosphate site. Residue alanine 138 participates in NADPH binding. Positions 189, 244, 254, 255, and 256 each coordinate sn-glycerol 3-phosphate. The Proton acceptor role is filled by lysine 189. Arginine 255 is an NADPH binding site. NADPH contacts are provided by isoleucine 279 and glutamate 281.

It belongs to the NAD-dependent glycerol-3-phosphate dehydrogenase family.

It is found in the cytoplasm. It carries out the reaction sn-glycerol 3-phosphate + NAD(+) = dihydroxyacetone phosphate + NADH + H(+). The enzyme catalyses sn-glycerol 3-phosphate + NADP(+) = dihydroxyacetone phosphate + NADPH + H(+). It functions in the pathway membrane lipid metabolism; glycerophospholipid metabolism. In terms of biological role, catalyzes the reduction of the glycolytic intermediate dihydroxyacetone phosphate (DHAP) to sn-glycerol 3-phosphate (G3P), the key precursor for phospholipid synthesis. This is Glycerol-3-phosphate dehydrogenase [NAD(P)+] from Ehrlichia canis (strain Jake).